The following is a 916-amino-acid chain: Probable serine/threonine-protein kinase DDB_G0267514 (916 aa).

Disordered regions lie at residues 283–311 (SGGG…SGGS), 461–518 (NNNQ…SPLD), and 550–646 (FNNQ…EPPS). Low complexity-rich tracts occupy residues 461–493 (NNNQ…QQQP) and 550–622 (FNNQ…LINN). A compositionally biased stretch (polar residues) spans 623–646 (HSPNQYNNQGNILKNSGSVVEPPS). The 255-residue stretch at 662-916 (LKISSKLGEG…EILNLLNEIP (255 aa)) folds into the Protein kinase domain. Residues 668 to 676 (LGEGTFGVV) and lysine 689 each bind ATP. Catalysis depends on aspartate 784, which acts as the Proton acceptor.

The protein belongs to the protein kinase superfamily. TKL Ser/Thr protein kinase family.

The enzyme catalyses L-seryl-[protein] + ATP = O-phospho-L-seryl-[protein] + ADP + H(+). It carries out the reaction L-threonyl-[protein] + ATP = O-phospho-L-threonyl-[protein] + ADP + H(+). The polypeptide is Probable serine/threonine-protein kinase DDB_G0267514 (Dictyostelium discoideum (Social amoeba)).